A 64-amino-acid chain; its full sequence is Large ribosomal subunit protein bL35 (64 aa).

Belongs to the bacterial ribosomal protein bL35 family.

The polypeptide is Large ribosomal subunit protein bL35 (Ureaplasma parvum serovar 3 (strain ATCC 27815 / 27 / NCTC 11736)).